The chain runs to 295 residues: UDP-N-acetylenolpyruvoylglucosamine reductase (295 aa).

The 166-residue stretch at 23 to 188 (QVGGPADFLA…ISAKFALKPG (166 aa)) folds into the FAD-binding PCMH-type domain. R167 is a catalytic residue. S217 (proton donor) is an active-site residue. E287 is a catalytic residue.

It belongs to the MurB family. The cofactor is FAD.

The protein localises to the cytoplasm. The enzyme catalyses UDP-N-acetyl-alpha-D-muramate + NADP(+) = UDP-N-acetyl-3-O-(1-carboxyvinyl)-alpha-D-glucosamine + NADPH + H(+). It functions in the pathway cell wall biogenesis; peptidoglycan biosynthesis. Cell wall formation. This is UDP-N-acetylenolpyruvoylglucosamine reductase from Streptococcus equi subsp. zooepidemicus (strain H70).